The chain runs to 153 residues: MVIGSFPVGKIFIHGVKRISKPFGDLLIWMGKHHPFIRRYIIIPPAQLYNTFEVRSKLRMLRLKQPRRIPPLSTPVATRLGADMLSEAFVFGIGAGLIYYELSKTYTKTKKQNQEIEDQKRVLDECVDCISADVERNQREINWIKAALKNVEK.

Residues 101–153 are a coiled coil; that stretch reads ELSKTYTKTKKQNQEIEDQKRVLDECVDCISADVERNQREINWIKAALKNVEK.

It belongs to the OPA3 family.

This chain is Putative OPA3-like protein CG43998, found in Drosophila melanogaster (Fruit fly).